We begin with the raw amino-acid sequence, 73 residues long: Large ribosomal subunit protein bL31 (73 aa).

It belongs to the bacterial ribosomal protein bL31 family. Type A subfamily. As to quaternary structure, part of the 50S ribosomal subunit.

Its function is as follows. Binds the 23S rRNA. The protein is Large ribosomal subunit protein bL31 of Rhizobium meliloti (strain 1021) (Ensifer meliloti).